Consider the following 447-residue polypeptide: UPF0210 protein lhv_0606 (447 aa).

It belongs to the UPF0210 family. As to quaternary structure, homodimer.

This chain is UPF0210 protein lhv_0606, found in Lactobacillus helveticus (strain DPC 4571).